The following is a 234-amino-acid chain: tRNA (guanine-N(1)-)-methyltransferase (234 aa).

S-adenosyl-L-methionine contacts are provided by residues glycine 115 and 135-140 (VGDYIL).

Belongs to the RNA methyltransferase TrmD family. As to quaternary structure, homodimer.

The protein localises to the cytoplasm. The enzyme catalyses guanosine(37) in tRNA + S-adenosyl-L-methionine = N(1)-methylguanosine(37) in tRNA + S-adenosyl-L-homocysteine + H(+). Its function is as follows. Specifically methylates guanosine-37 in various tRNAs. This chain is tRNA (guanine-N(1)-)-methyltransferase, found in Rickettsia typhi (strain ATCC VR-144 / Wilmington).